We begin with the raw amino-acid sequence, 1368 residues long: DNA-directed RNA polymerase subunit beta (1368 aa).

Belongs to the RNA polymerase beta chain family. In terms of assembly, the RNAP catalytic core consists of 2 alpha, 1 beta, 1 beta' and 1 omega subunit. When a sigma factor is associated with the core the holoenzyme is formed, which can initiate transcription.

The enzyme catalyses RNA(n) + a ribonucleoside 5'-triphosphate = RNA(n+1) + diphosphate. In terms of biological role, DNA-dependent RNA polymerase catalyzes the transcription of DNA into RNA using the four ribonucleoside triphosphates as substrates. The polypeptide is DNA-directed RNA polymerase subunit beta (Desulfosudis oleivorans (strain DSM 6200 / JCM 39069 / Hxd3) (Desulfococcus oleovorans)).